A 129-amino-acid chain; its full sequence is Small ribosomal subunit protein uS11 (129 aa).

The protein belongs to the universal ribosomal protein uS11 family. In terms of assembly, part of the 30S ribosomal subunit. Interacts with proteins S7 and S18. Binds to IF-3.

Located on the platform of the 30S subunit, it bridges several disparate RNA helices of the 16S rRNA. Forms part of the Shine-Dalgarno cleft in the 70S ribosome. This Azorhizobium caulinodans (strain ATCC 43989 / DSM 5975 / JCM 20966 / LMG 6465 / NBRC 14845 / NCIMB 13405 / ORS 571) protein is Small ribosomal subunit protein uS11.